The sequence spans 70 residues: MARVTVEDCLDKVENRFLLVMLASKRVKQLYKGARPLVDPKNNRLVVTSLREIAAGKVGYEMIKRQRTQQ.

It belongs to the RNA polymerase subunit omega family. In terms of assembly, the RNAP catalytic core consists of 2 alpha, 1 beta, 1 beta' and 1 omega subunit. When a sigma factor is associated with the core the holoenzyme is formed, which can initiate transcription.

The enzyme catalyses RNA(n) + a ribonucleoside 5'-triphosphate = RNA(n+1) + diphosphate. Its function is as follows. Promotes RNA polymerase assembly. Latches the N- and C-terminal regions of the beta' subunit thereby facilitating its interaction with the beta and alpha subunits. This chain is DNA-directed RNA polymerase subunit omega, found in Pelobacter propionicus (strain DSM 2379 / NBRC 103807 / OttBd1).